The chain runs to 432 residues: Gamma-glutamyl phosphate reductase (432 aa).

Belongs to the gamma-glutamyl phosphate reductase family.

The protein localises to the cytoplasm. The enzyme catalyses L-glutamate 5-semialdehyde + phosphate + NADP(+) = L-glutamyl 5-phosphate + NADPH + H(+). The protein operates within amino-acid biosynthesis; L-proline biosynthesis; L-glutamate 5-semialdehyde from L-glutamate: step 2/2. In terms of biological role, catalyzes the NADPH-dependent reduction of L-glutamate 5-phosphate into L-glutamate 5-semialdehyde and phosphate. The product spontaneously undergoes cyclization to form 1-pyrroline-5-carboxylate. The sequence is that of Gamma-glutamyl phosphate reductase from Methylorubrum populi (strain ATCC BAA-705 / NCIMB 13946 / BJ001) (Methylobacterium populi).